The sequence spans 942 residues: Isoleucine--tRNA ligase (942 aa).

A 'HIGH' region motif is present at residues 58-68 (PYANGDIHIGH). E566 is an L-isoleucyl-5'-AMP binding site. Positions 607–611 (KMSKS) match the 'KMSKS' region motif. K610 provides a ligand contact to ATP. Zn(2+) contacts are provided by C905, C908, C925, and C928.

The protein belongs to the class-I aminoacyl-tRNA synthetase family. IleS type 1 subfamily. Monomer. Zn(2+) is required as a cofactor.

Its subcellular location is the cytoplasm. The enzyme catalyses tRNA(Ile) + L-isoleucine + ATP = L-isoleucyl-tRNA(Ile) + AMP + diphosphate. Its function is as follows. Catalyzes the attachment of isoleucine to tRNA(Ile). As IleRS can inadvertently accommodate and process structurally similar amino acids such as valine, to avoid such errors it has two additional distinct tRNA(Ile)-dependent editing activities. One activity is designated as 'pretransfer' editing and involves the hydrolysis of activated Val-AMP. The other activity is designated 'posttransfer' editing and involves deacylation of mischarged Val-tRNA(Ile). This is Isoleucine--tRNA ligase from Vibrio parahaemolyticus serotype O3:K6 (strain RIMD 2210633).